The primary structure comprises 706 residues: Polyribonucleotide nucleotidyltransferase (706 aa).

Mg(2+) is bound by residues aspartate 490 and aspartate 496. Residues 556–615 (PRIETMQIPTDKIREVIGSGGKVIREIVEVSGAKVDINDEGIIKIASPNGDSIQKAYDMI) form the KH domain. Residues 625-693 (GKIYKGKVVK…DRGKVRLAMK (69 aa)) enclose the S1 motif domain.

This sequence belongs to the polyribonucleotide nucleotidyltransferase family. The cofactor is Mg(2+).

Its subcellular location is the cytoplasm. It catalyses the reaction RNA(n+1) + phosphate = RNA(n) + a ribonucleoside 5'-diphosphate. Its function is as follows. Involved in mRNA degradation. Catalyzes the phosphorolysis of single-stranded polyribonucleotides processively in the 3'- to 5'-direction. This chain is Polyribonucleotide nucleotidyltransferase, found in Jannaschia sp. (strain CCS1).